A 401-amino-acid polypeptide reads, in one-letter code: Argininosuccinate synthase (401 aa).

9 to 17 (AYSGGLDTS) provides a ligand contact to ATP. Tyrosine 86 is a binding site for L-citrulline. Glycine 116 lines the ATP pocket. Threonine 118, asparagine 122, and aspartate 123 together coordinate L-aspartate. Asparagine 122 is an L-citrulline binding site. L-citrulline-binding residues include arginine 126, serine 174, serine 183, glutamate 259, and tyrosine 271.

This sequence belongs to the argininosuccinate synthase family. Type 1 subfamily. Homotetramer.

It localises to the cytoplasm. The catalysed reaction is L-citrulline + L-aspartate + ATP = 2-(N(omega)-L-arginino)succinate + AMP + diphosphate + H(+). It participates in amino-acid biosynthesis; L-arginine biosynthesis; L-arginine from L-ornithine and carbamoyl phosphate: step 2/3. This is Argininosuccinate synthase from Bacillus cereus (strain B4264).